A 205-amino-acid polypeptide reads, in one-letter code: Holliday junction branch migration complex subunit RuvA (205 aa).

The interval 1–68 (MIGYLEGTLL…QPKPVLIGFN (68 aa)) is domain I. A domain II region spans residues 69–146 (TEEEKDFFHL…RFADAGHSSA (78 aa)). Residues 147-151 (PDVPV) form a flexible linker region. The interval 152-205 (TGSLADQTVEVLVGQLGYKPNEARLMVAGALKRNPDVSTPEALFDEIFKHGQAQ) is domain III.

It belongs to the RuvA family. In terms of assembly, homotetramer. Forms an RuvA(8)-RuvB(12)-Holliday junction (HJ) complex. HJ DNA is sandwiched between 2 RuvA tetramers; dsDNA enters through RuvA and exits via RuvB. An RuvB hexamer assembles on each DNA strand where it exits the tetramer. Each RuvB hexamer is contacted by two RuvA subunits (via domain III) on 2 adjacent RuvB subunits; this complex drives branch migration. In the full resolvosome a probable DNA-RuvA(4)-RuvB(12)-RuvC(2) complex forms which resolves the HJ.

The protein resides in the cytoplasm. Functionally, the RuvA-RuvB-RuvC complex processes Holliday junction (HJ) DNA during genetic recombination and DNA repair, while the RuvA-RuvB complex plays an important role in the rescue of blocked DNA replication forks via replication fork reversal (RFR). RuvA specifically binds to HJ cruciform DNA, conferring on it an open structure. The RuvB hexamer acts as an ATP-dependent pump, pulling dsDNA into and through the RuvAB complex. HJ branch migration allows RuvC to scan DNA until it finds its consensus sequence, where it cleaves and resolves the cruciform DNA. The sequence is that of Holliday junction branch migration complex subunit RuvA from Desulfosudis oleivorans (strain DSM 6200 / JCM 39069 / Hxd3) (Desulfococcus oleovorans).